Consider the following 1006-residue polypeptide: Unconventional myosin-Id (1006 aa).

The residue at position 2 (Ala-2) is an N-acetylalanine. The Myosin motor domain maps to 9-695 (FGKADFVLMD…TLFTLEELRA (687 aa)). 102–109 (GESGAGKT) is an ATP binding site. Ser-200 is modified (phosphoserine). Tyr-536 carries the post-translational modification Phosphotyrosine. The tract at residues 572-594 (MIALVDNLASKEPYYVRCIKPND) is actin-binding. 2 IQ domains span residues 699 to 719 (VRVV…MRYK) and 721 to 741 (TKAA…SYIH). Residues 776 to 896 (LQSIFNRWRA…MDPTKQYKVM (121 aa)) form an interaction with calmodulin region. Positions 812-1005 (GQRADLGLQR…RSGFILSVPG (194 aa)) constitute a TH1 domain.

Belongs to the TRAFAC class myosin-kinesin ATPase superfamily. Myosin family. In terms of assembly, interacts (via the two IQ motifs) with calmodulin. Binds an additional calmodulin chain via a third, C-terminal region. Interacts with F-actin. Detected on tracheal epithelial cells, and on epithelial cells and brush border cells in duodenum, jejunum and ileum. Detected on myelinated white matter in the cerebellum, and the myelinated part of the optic nerve. Detected on mature oligodendrocites. Detected on the outside of the myelin sheet that surrounds axons (at protein level). Ubiquitous. Highest levels in adult brain, and spinal cord. Moderate levels in lung, kidney, liver and spleen. Low levels in testis and heart (at protein level).

It localises to the cytoplasm. The protein resides in the perikaryon. Its subcellular location is the cell projection. The protein localises to the dendrite. It is found in the early endosome. It localises to the cell cortex. Unconventional myosin that functions as actin-based motor protein with ATPase activity. Plays a role in endosomal protein trafficking, and especially in the transfer of cargo proteins from early to recycling endosomes. Required for normal planar cell polarity in ciliated tracheal cells, for normal rotational polarity of cilia, and for coordinated, unidirectional ciliary movement in the trachea. Required for normal, polarized cilia organization in brain ependymal epithelial cells. The polypeptide is Unconventional myosin-Id (Myo1d) (Rattus norvegicus (Rat)).